The following is an 893-amino-acid chain: Serine/threonine-protein kinase/endoribonuclease IRE1 (893 aa).

An N-terminal signal peptide occupies residues 1 to 19 (MRSLRRVLLQLVLLAGVAF). Residues 20-379 (RGVRFDDAAD…NSVTKFSYRW (360 aa)) lie on the Lumenal side of the membrane. 4 N-linked (GlcNAc...) asparagine glycosylation sites follow: Asn-105, Asn-158, Asn-259, and Asn-351. The helical transmembrane segment at 380 to 397 (LFPTFLMLLIMACLVKLA) threads the bilayer. At 398 to 893 (DASKYCRQFV…FSKYFLGSSA (496 aa)) the chain is on the cytoplasmic side. The interval 451 to 478 (ASDKEGNGTGGSTEAQSNKAHDSTNVEL) is disordered. Positions 491 to 759 (CVYSKEIGKG…AVYVMHHPFF (269 aa)) constitute a Protein kinase domain. Residues 497 to 505 (IGKGSNGTV) and Lys-519 each bind ATP. The active-site Proton acceptor is Asp-625. One can recognise a KEN domain in the interval 762 to 890 (PELCLSFLRD…EEAFSKYFLG (129 aa)).

It belongs to the protein kinase superfamily. Ser/Thr protein kinase family. As to quaternary structure, homodimer; disulfide-linked. Dimer formation is driven by hydrophobic interactions within the N-terminal luminal domains and stabilized by disulfide bridges. Autophosphorylated. As to expression, expressed in roots, nodes, internodes, leaf sheaths, leaf blades, young ears and mature ears.

It is found in the endoplasmic reticulum membrane. It catalyses the reaction L-seryl-[protein] + ATP = O-phospho-L-seryl-[protein] + ADP + H(+). The enzyme catalyses L-threonyl-[protein] + ATP = O-phospho-L-threonyl-[protein] + ADP + H(+). In terms of biological role, involved in endoplasmic reticulum (ER) stress response. Senses unfolded proteins in the lumen of the ER via its N-terminal domain which leads to enzyme auto-activation. The active endoribonuclease domain splices bZIP50 mRNA to generate a new C-terminus, converting it into a potent unfolded-protein response (UPR) transcriptional activator, which then induces transcription of UPR target genes, such as luminal-binding protein (BiP) chaperones. This chain is Serine/threonine-protein kinase/endoribonuclease IRE1, found in Oryza sativa subsp. japonica (Rice).